Consider the following 47-residue polypeptide: Large ribosomal subunit protein bL34 (47 aa).

Positions 1–28 (MAKGKRTFQPNNRRRARVHGFRTRMRTR) are disordered.

Belongs to the bacterial ribosomal protein bL34 family.

The polypeptide is Large ribosomal subunit protein bL34 (Corynebacterium efficiens (strain DSM 44549 / YS-314 / AJ 12310 / JCM 11189 / NBRC 100395)).